A 260-amino-acid polypeptide reads, in one-letter code: 3-dehydroquinate dehydratase (260 aa).

Residues 50–52 (EWR) and Arg-86 contribute to the 3-dehydroquinate site. The active-site Proton donor/acceptor is the His-148. Lys-175 serves as the catalytic Schiff-base intermediate with substrate. 3-dehydroquinate is bound by residues Arg-217, Ser-236, and Gln-240.

The protein belongs to the type-I 3-dehydroquinase family. As to quaternary structure, homodimer.

It catalyses the reaction 3-dehydroquinate = 3-dehydroshikimate + H2O. It functions in the pathway metabolic intermediate biosynthesis; chorismate biosynthesis; chorismate from D-erythrose 4-phosphate and phosphoenolpyruvate: step 3/7. Functionally, involved in the third step of the chorismate pathway, which leads to the biosynthesis of aromatic amino acids. Catalyzes the cis-dehydration of 3-dehydroquinate (DHQ) and introduces the first double bond of the aromatic ring to yield 3-dehydroshikimate. The sequence is that of 3-dehydroquinate dehydratase from Aromatoleum aromaticum (strain DSM 19018 / LMG 30748 / EbN1) (Azoarcus sp. (strain EbN1)).